We begin with the raw amino-acid sequence, 605 residues long: Insulin-like growth factor-binding protein complex acid labile subunit (605 aa).

The signal sequence occupies residues 1–27 (MALRKGGLALALLLLSWVALGPRSLEG). The region spanning 32–74 (TPGEAEGPACPATCACSYDDEVNELSVFCSSRNLTRLPDGIPG) is the LRRNT domain. 2 disulfide bridges follow: cysteine 41/cysteine 47 and cysteine 45/cysteine 60. 3 N-linked (GlcNAc...) asparagine glycosylation sites follow: asparagine 64, asparagine 85, and asparagine 96. LRR repeat units lie at residues 75-96 (GTQA…AFRN), 99-120 (SLAF…ALLG), 123-144 (NLCH…TFAY), 147-168 (ALAL…LFEG), 171-192 (NLWD…AFRG), 195-216 (GLRE…LFSG), 219-240 (ELRE…VFAQ), 243-264 (RLQK…AFLG), 267-288 (ALRW…TFPG), 291-312 (GLRV…TFED), 315-336 (FLEE…SFEG), 339-360 (QLEV…AFLG), 363-384 (NVAV…VFRG), 387-408 (KLHS…TFAG), 411-432 (GLRR…SLWG), 435-456 (ELLE…LFQG), 459-480 (KLEY…ALGP), 483-504 (RAFW…LLAS), and 507-528 (RLRY…PPGL). N-linked (GlcNAc...) asparagine glycosylation occurs at asparagine 368. A glycan (N-linked (GlcNAc...) asparagine) is linked at asparagine 515. In terms of domain architecture, LRRCT spans 536–605 (NPWDCSCPLK…DLGEAHFAPC (70 aa)). 3 disulfide bridges follow: cysteine 540/cysteine 583, cysteine 542/cysteine 605, and cysteine 566/cysteine 571. A glycan (N-linked (GlcNAc...) asparagine) is linked at asparagine 580.

In terms of assembly, forms a ternary complex with IGF1 and IGFBP3.

Its subcellular location is the secreted. It is found in the extracellular space. In terms of biological role, involved in protein-protein interactions that result in protein complexes, receptor-ligand binding or cell adhesion. This chain is Insulin-like growth factor-binding protein complex acid labile subunit (IGFALS), found in Papio hamadryas (Hamadryas baboon).